Here is a 766-residue protein sequence, read N- to C-terminus: UPF0313 protein PP_4872 (766 aa).

Residues 371–649 (AYEMIRFSVN…KAFLRYHDPK (279 aa)) enclose the Radical SAM core domain. [4Fe-4S] cluster is bound by residues Cys385, Cys389, and Cys392. The tract at residues 670 to 766 (GKHQLIPLHQ…KKPRQPVIPR (97 aa)) is disordered. Over residues 723 to 735 (KPWDKREKAKAEA) the composition is skewed to basic and acidic residues.

It belongs to the UPF0313 family. [4Fe-4S] cluster is required as a cofactor.

The chain is UPF0313 protein PP_4872 from Pseudomonas putida (strain ATCC 47054 / DSM 6125 / CFBP 8728 / NCIMB 11950 / KT2440).